A 63-amino-acid polypeptide reads, in one-letter code: DNA-directed RNA polymerase 7 kDa subunit (63 aa).

The protein belongs to the poxviridae DNA-directed RNA polymerase 7 kDa subunit family. The DNA-dependent RNA polymerase used for intermediate and late genes expression consists of eight subunits 147 kDa, 133 kDa, 35 kDa, 30 kDa, 22 kDa, 19 kDa, 18 kDa and 7 kDa totalling more than 500 kDa in mass. The same holoenzyme, with the addition of the transcription-specificity factor RAP94, is used for early gene expression.

Its subcellular location is the virion. The catalysed reaction is RNA(n) + a ribonucleoside 5'-triphosphate = RNA(n+1) + diphosphate. In terms of biological role, part of the DNA-dependent RNA polymerase which catalyzes the transcription of viral DNA into RNA using the four ribonucleoside triphosphates as substrates. Responsible for the transcription of early, intermediate and late genes. DNA-dependent RNA polymerase associates with the early transcription factor (ETF) thereby allowing the early genes transcription. Late transcription, and probably also intermediate transcription, require newly synthesized RNA polymerase. This Myxoma virus (strain Lausanne) (MYXV) protein is DNA-directed RNA polymerase 7 kDa subunit (RPO7).